The sequence spans 542 residues: Protein XP55 (542 aa).

The first 33 residues, M1–A33, serve as a signal peptide directing secretion. C34 is lipidated: N-palmitoyl cysteine. C34 carries S-diacylglycerol cysteine lipidation. A disordered region spans residues L519–K542.

It belongs to the bacterial solute-binding protein 5 family.

The protein localises to the cell membrane. Functionally, required for transport of an unidentified substrate. This is Protein XP55 (xp55) from Streptomyces lividans.